We begin with the raw amino-acid sequence, 196 residues long: Beta-crystallin A2 (196 aa).

The N-terminal arm stretch occupies residues 1–11; sequence MTSEAMDTLGQ. Beta/gamma crystallin 'Greek key' domains follow at residues 12–51 and 52–98; these read YKIT…KVES and GPWV…RPVK. Residues 99-104 form a connecting peptide region; that stretch reads CANHND. 2 Beta/gamma crystallin 'Greek key' domains span residues 105 to 146 and 147 to 195; these read SKAI…KVNA and GAWV…RRIQ.

Belongs to the beta/gamma-crystallin family. In terms of assembly, homo/heterodimer, or complexes of higher-order. The structure of beta-crystallin oligomers seems to be stabilized through interactions between the N-terminal arms.

Functionally, crystallins are the dominant structural components of the vertebrate eye lens. The protein is Beta-crystallin A2 (CRYBA2) of Gallus gallus (Chicken).